We begin with the raw amino-acid sequence, 502 residues long: Adenylate cyclase (502 aa).

Residues 1 to 25 (MGDFCRRVDCKAMKFFALRSSIRTQ) are Cytoplasmic-facing. Residues 26–46 (IMASTTLLILALIGAIVTVWA) traverse the membrane as a helical segment. The Lumenal, thylakoid portion of the chain corresponds to 47 to 203 (KSESTLYHQE…RKVNLAVTNA (157 aa)). The chain crosses the membrane as a helical span at residues 204–226 (VNQALVVGFAGLNIGWICAYFLA). An HAMP domain is found at 227 to 280 (QHLSDPVRRLQISVAKIAGGDLQHRADIHSRADEIGALATSVNEMSAALQISFN). At 227–502 (QHLSDPVRRL…EAISIYEVKA (276 aa)) the chain is on the cytoplasmic side. A Guanylate cyclase domain is found at 320-451 (TILFCDIRGY…DAVNVASRIE (132 aa)). Mg(2+)-binding residues include Asp-325 and Asp-369.

It belongs to the adenylyl cyclase class-3 family. The cofactor is Mg(2+).

It is found in the cellular thylakoid membrane. The catalysed reaction is ATP = 3',5'-cyclic AMP + diphosphate. May function as a membrane-localized receptor protein. The protein is Adenylate cyclase (cya) of Anabaena cylindrica.